Here is a 483-residue protein sequence, read N- to C-terminus: Putative (R)-citramalate synthase CimA (483 aa).

Residues 1-245 (MRDGEQTPGV…DTGIKHEQIY (245 aa)) form the Pyruvate carboxyltransferase domain.

This sequence belongs to the alpha-IPM synthase/homocitrate synthase family. As to quaternary structure, homodimer.

The enzyme catalyses pyruvate + acetyl-CoA + H2O = (3R)-citramalate + CoA + H(+). It participates in amino-acid biosynthesis; L-isoleucine biosynthesis; 2-oxobutanoate from pyruvate: step 1/3. Its function is as follows. Catalyzes the condensation of pyruvate and acetyl-coenzyme A to form (R)-citramalate. The polypeptide is Putative (R)-citramalate synthase CimA (Methanosarcina mazei (strain ATCC BAA-159 / DSM 3647 / Goe1 / Go1 / JCM 11833 / OCM 88) (Methanosarcina frisia)).